Here is a 188-residue protein sequence, read N- to C-terminus: Adenine phosphoribosyltransferase (188 aa).

This sequence belongs to the purine/pyrimidine phosphoribosyltransferase family. As to quaternary structure, homodimer.

It localises to the cytoplasm. It catalyses the reaction AMP + diphosphate = 5-phospho-alpha-D-ribose 1-diphosphate + adenine. The protein operates within purine metabolism; AMP biosynthesis via salvage pathway; AMP from adenine: step 1/1. Catalyzes a salvage reaction resulting in the formation of AMP, that is energically less costly than de novo synthesis. In Paraburkholderia xenovorans (strain LB400), this protein is Adenine phosphoribosyltransferase.